Here is a 181-residue protein sequence, read N- to C-terminus: ATP-dependent protease subunit HslV (181 aa).

Threonine 5 is an active-site residue. The Na(+) site is built by alanine 161, cysteine 164, and threonine 167.

The protein belongs to the peptidase T1B family. HslV subfamily. A double ring-shaped homohexamer of HslV is capped on each side by a ring-shaped HslU homohexamer. The assembly of the HslU/HslV complex is dependent on binding of ATP.

The protein localises to the cytoplasm. It catalyses the reaction ATP-dependent cleavage of peptide bonds with broad specificity.. With respect to regulation, allosterically activated by HslU binding. Protease subunit of a proteasome-like degradation complex believed to be a general protein degrading machinery. This Sulfurimonas denitrificans (strain ATCC 33889 / DSM 1251) (Thiomicrospira denitrificans (strain ATCC 33889 / DSM 1251)) protein is ATP-dependent protease subunit HslV.